We begin with the raw amino-acid sequence, 1164 residues long: Phospholipid-transporting ATPase IA (1164 aa).

At 1-65 (MPTMRRTVSE…TAKYNIITFL (65 aa)) the chain is on the cytoplasmic side. Residue serine 25 is modified to Phosphoserine. Phosphothreonine is present on threonine 28. Serine 29 carries the phosphoserine modification. Residues 66–86 (PRFLYSQFRRAANSFFLFIAL) traverse the membrane as a helical segment. Topologically, residues 87–92 (LQQIPD) are exoplasmic loop. Residues 93–115 (VSPTGRYTTLVPLLFILAVAAIK) traverse the membrane as a helical segment. At 116–297 (EIIEDIKRHK…SNVERITNVQ (182 aa)) the chain is on the cytoplasmic side. The helical transmembrane segment at 298–319 (ILILFCILIAMSLVCSVGSAIW) threads the bilayer. At 320–344 (NRRHSGKDWYLNLNYGGASNFGLNF) the chain is on the exoplasmic loop side. The helical transmembrane segment at 345–366 (LTFIILFNNLIPISLLVTLEVV) threads the bilayer. Topologically, residues 367 to 857 (KFTQAYFINW…GAWNYNRVSK (491 aa)) are cytoplasmic. Residue aspartate 409 is the 4-aspartylphosphate intermediate of the active site. Residues aspartate 409, lysine 410, and threonine 411 each coordinate ATP. Aspartate 409 provides a ligand contact to Mg(2+). Residue threonine 411 participates in Mg(2+) binding. A Phosphoserine modification is found at serine 443. ATP is bound by residues glutamate 508, phenylalanine 549, lysine 572, arginine 605, threonine 685, glycine 686, aspartate 687, 741 to 748 (ALIIDGKT), arginine 775, and lysine 781. Aspartate 801 contributes to the Mg(2+) binding site. 2 residues coordinate ATP: asparagine 804 and aspartate 805. Aspartate 805 lines the Mg(2+) pocket. Residues 858 to 878 (CILYCFYKNIVLYIIEIWFAF) traverse the membrane as a helical segment. The Exoplasmic loop portion of the chain corresponds to 879-890 (VNGFSGQILFER). A helical transmembrane segment spans residues 891–910 (WCIGLYNVMFTAMPPLTLGI). Residues 911-940 (FERSCRKENMLKYPELYKTSQNALDFNTKV) lie on the Cytoplasmic side of the membrane. A helical membrane pass occupies residues 941–962 (FWVHCLNGLFHSVILFWFPLKA). Topologically, residues 963 to 976 (LQYGTAFGNGKTSD) are exoplasmic loop. A helical membrane pass occupies residues 977 to 999 (YLLLGNFVYTFVVITVCLKAGLE). Over 1000 to 1005 (TSYWTW) the chain is Cytoplasmic. Residues 1006 to 1026 (FSHIAIWGSIALWVVFFGIYS) form a helical membrane-spanning segment. Over 1027-1044 (SLWPAIPMAPDMSGEAAM) the chain is Exoplasmic loop. Residues 1045 to 1070 (LFSSGVFWMGLLFIPVASLLLDVVYK) traverse the membrane as a helical segment. Residues 1071 to 1164 (VIKRTAFKTL…DTTKQRPDEW (94 aa)) lie on the Cytoplasmic side of the membrane. 1095 to 1102 (GAVVLGKS) contacts ATP. Serine 1126 bears the Phosphoserine mark.

This sequence belongs to the cation transport ATPase (P-type) (TC 3.A.3) family. Type IV subfamily. Component of a P4-ATPase flippase complex which consists of a catalytic alpha subunit and an accessory beta subunit. Interacts with TMEM30A to form a flippase complex; this complex forms an intermediate phosphoenzyme. Interacts with TMEM30B; this interaction is reported conflictingly. The cofactor is Mg(2+). Post-translationally, cleaved by calpain in a caspase- and calcium influx-dependent manner during platelet apoptosis leading to a 100 kDa polypeptide. In terms of tissue distribution, found in most adult tissues except liver, testis and placenta. Most abundant in heart, brain and skeletal muscle. Also detected in fetal tissues. Isoform 1 is only detected in brain, skeletal muscle and heart and is the most abundant form in skeletal muscle. Highly expressed in platelets.

The protein localises to the cytoplasmic vesicle. Its subcellular location is the secretory vesicle. It is found in the chromaffin granule membrane. It localises to the cytoplasmic granule. The protein resides in the cell membrane. The protein localises to the endoplasmic reticulum. Its subcellular location is the golgi apparatus. It carries out the reaction ATP + H2O + phospholipidSide 1 = ADP + phosphate + phospholipidSide 2.. The catalysed reaction is a 1,2-diacyl-sn-glycero-3-phospho-L-serine(out) + ATP + H2O = a 1,2-diacyl-sn-glycero-3-phospho-L-serine(in) + ADP + phosphate + H(+). With respect to regulation, ATPase activity is stimulated by phosphatidylserine (PS) and minimally by phosphatidylethanolamine (PE). ATPase activity is inhibited by beryllium fluoride and aluminum trifluoride. Functionally, catalytic component of a P4-ATPase flippase complex which catalyzes the hydrolysis of ATP coupled to the transport of aminophospholipids from the outer to the inner leaflet of various membranes and ensures the maintenance of asymmetric distribution of phospholipids. Phospholipid translocation also seems to be implicated in vesicle formation and in uptake of lipid signaling molecules. In vitro, its ATPase activity is selectively and stereospecifically stimulated by phosphatidylserine (PS). The flippase complex ATP8A1:TMEM30A seems to play a role in regulation of cell migration probably involving flippase-mediated translocation of phosphatidylethanolamine (PE) at the cell membrane. Acts as aminophospholipid translocase at the cell membrane in neuronal cells. This Homo sapiens (Human) protein is Phospholipid-transporting ATPase IA.